A 271-amino-acid chain; its full sequence is Glutamate racemase (271 aa).

Substrate is bound by residues 12–13 (DS) and 44–45 (YG). The active-site Proton donor/acceptor is the cysteine 75. Position 76–77 (76–77 (NT)) interacts with substrate. Cysteine 185 serves as the catalytic Proton donor/acceptor. Position 186-187 (186-187 (TH)) interacts with substrate.

The protein belongs to the aspartate/glutamate racemases family.

The enzyme catalyses L-glutamate = D-glutamate. Its pathway is cell wall biogenesis; peptidoglycan biosynthesis. Functionally, provides the (R)-glutamate required for cell wall biosynthesis. The polypeptide is Glutamate racemase (Mycobacterium marinum (strain ATCC BAA-535 / M)).